A 972-amino-acid polypeptide reads, in one-letter code: Mast/stem cell growth factor receptor Kit (972 aa).

The signal sequence occupies residues Met1 to Ser25. Residues Gln26–Pro520 lie on the Extracellular side of the membrane. Ig-like C2-type domains follow at residues Pro27 to Arg112, Asp121 to Arg205, Pro212 to Val308, Pro317 to Asn410, and Pro413 to Ala507. Cysteines 58 and 97 form a disulfide. Asn130 and Asn145 each carry an N-linked (GlcNAc...) asparagine glycan. 3 disulfides stabilise this stretch: Cys136-Cys186, Cys151-Cys183, and Cys233-Cys290. N-linked (GlcNAc...) asparagine glycosylation is found at Asn283, Asn300, Asn320, Asn352, Asn367, Asn463, and Asn486. Cys428 and Cys491 form a disulfide bridge. A helical transmembrane segment spans residues Leu521–Tyr541. The Cytoplasmic segment spans residues Lys542–Val972. A phosphotyrosine mark is found at Tyr543 and Tyr549. Tyr564 lines the Mg(2+) pocket. Phosphotyrosine; by autocatalysis occurs at positions 564 and 566. Residues Tyr564–Tyr566 are important for interaction with phosphotyrosine-binding proteins. Positions Leu585–Ser933 constitute a Protein kinase domain. ATP contacts are provided by residues Gly592–Val599, Lys619, and Glu667–Asp673. Tyr699 and Tyr717 each carry phosphotyrosine; by autocatalysis. Position 726 is a phosphotyrosine (Tyr726). Residues Ser737 and Ser742 each carry the phosphoserine; by PKC/PRKCA modification. Asp788 (proton acceptor) is an active-site residue. Arg792 contributes to the ATP binding site. Mg(2+)-binding residues include Asn793 and Asp806. Ser817 carries the post-translational modification Phosphoserine. The residue at position 819 (Tyr819) is a Phosphotyrosine; by autocatalysis. The residue at position 887 (Ser887) is a Phosphoserine. Tyr896 is modified (phosphotyrosine). Tyr932 is subject to Phosphotyrosine; by autocatalysis. A Phosphoserine modification is found at Ser955.

Belongs to the protein kinase superfamily. Tyr protein kinase family. CSF-1/PDGF receptor subfamily. In terms of assembly, monomer in the absence of bound KITLG/SCF. Homodimer in the presence of bound KITLG/SCF, forming a heterotetramer with two KITLG/SCF molecules. Interacts (via phosphorylated tyrosine residues) with the adapter proteins GRB2 and GRB7 (via SH2 domain), and SH2B2/APS. Interacts (via C-terminus) with MPDZ (via the tenth PDZ domain). Interacts (via phosphorylated tyrosine residues) with PIK3R1 and PIK3CD. Interacts (via phosphorylated tyrosine) with CRK (isoform Crk-II), FYN, SHC1 and MATK/CHK (via SH2 domain). Interacts with LYN and FES/FPS. Interacts (via phosphorylated tyrosine residues) with the protein phosphatases PTPN6/SHP-1 (via SH2 domain), PTPN11/SHP-2 (via SH2 domain) and PTPRU. Interacts with PLCG1. Interacts with DOK1 and TEC. Interacts with IL1RAP (independent of stimulation with KITLG/SCF). A mast cell-specific KITLG/SCF-induced interleukin-33 signaling complex contains IL1RL1, IL1RAP, KIT and MYD88. Post-translationally, ubiquitinated by SOCS6. KIT is rapidly ubiquitinated after autophosphorylation induced by KITLG/SCF binding, leading to internalization and degradation. Autophosphorylated on tyrosine residues. KITLG/SCF binding promotes autophosphorylation. Phosphorylated tyrosine residues are important for interaction with specific binding partners.

It localises to the cell membrane. It catalyses the reaction L-tyrosyl-[protein] + ATP = O-phospho-L-tyrosyl-[protein] + ADP + H(+). Its activity is regulated as follows. Present in an inactive conformation in the absence of bound ligand. KITLG/SCF binding leads to dimerization and activation by autophosphorylation on tyrosine residues. Activity is down-regulated by PRKCA-mediated phosphorylation on serine residues. Tyrosine-protein kinase that acts as a cell-surface receptor for the cytokine KITLG/SCF and plays an essential role in the regulation of cell survival and proliferation, hematopoiesis, stem cell maintenance, gametogenesis, mast cell development, migration and function, and in melanogenesis. In response to KITLG/SCF binding, KIT can activate several signaling pathways. Phosphorylates PIK3R1, PLCG1, SH2B2/APS and CBL. Activates the AKT1 signaling pathway by phosphorylation of PIK3R1, the regulatory subunit of phosphatidylinositol 3-kinase. Activated KIT also transmits signals via GRB2 and activation of RAS, RAF1 and the MAP kinases MAPK1/ERK2 and/or MAPK3/ERK1. Promotes activation of STAT family members STAT1, STAT3, STAT5A and STAT5B. Activation of PLCG1 leads to the production of the cellular signaling molecules diacylglycerol and inositol 1,4,5-trisphosphate. KIT signaling is modulated by protein phosphatases, and by rapid internalization and degradation of the receptor. Activated KIT promotes phosphorylation of the protein phosphatases PTPN6/SHP-1 and PTPRU, and of the transcription factors STAT1, STAT3, STAT5A and STAT5B. Promotes phosphorylation of PIK3R1, CBL, CRK (isoform Crk-II), LYN, MAPK1/ERK2 and/or MAPK3/ERK1, PLCG1, SRC and SHC1. The sequence is that of Mast/stem cell growth factor receptor Kit (KIT) from Callithrix jacchus (White-tufted-ear marmoset).